The following is a 514-amino-acid chain: Transmembrane protein 151B (514 aa).

Positions 1-40 (MSAEGEPAEAVAETPANSPGEEAAAAAATTDVDVREEQRP) are disordered. 3 consecutive transmembrane segments (helical) span residues 57 to 77 (CLLLSILMFVCLGAVTWCQVT), 104 to 124 (YVYIPLAFLAMLYVVYLVECW), and 286 to 306 (PWYVSHYAFWVAALFMLSWPL).

The protein belongs to the TMEM151 family.

It localises to the membrane. The protein is Transmembrane protein 151B (tmem151b) of Xenopus tropicalis (Western clawed frog).